A 344-amino-acid chain; its full sequence is Outer membrane protein B (344 aa).

The signal sequence occupies residues 1-30 (MNSKMLKHLRLATLSFSMFFGIVSSPAVYA).

It belongs to the chlamydial OMP family.

The protein localises to the cell outer membrane. This is Outer membrane protein B (ompB) from Chlamydia pneumoniae (Chlamydophila pneumoniae).